Here is a 217-residue protein sequence, read N- to C-terminus: MPEFKIVISDPEAKADLPVYKVKVKGDESIEYGDDEKNQRKLPVCKLNPKLLEKLNAVHGIVTVRIRKEDRKFNYTCKATADANVPEDTVHVSLEWLGDKVGAEEAEGEVFRAKAWQITITSPAADQLIGLKIGDTFDGGLVGLPGYKLLIRGGSDNSGFPMLPSIPGPVKKRVLLSGPPGFHPREKGERRRKTVRGNTITHDIVQINTVIVYPKKE.

Belongs to the eukaryotic ribosomal protein eS6 family.

The polypeptide is Small ribosomal subunit protein eS6 (Hyperthermus butylicus (strain DSM 5456 / JCM 9403 / PLM1-5)).